The primary structure comprises 153 residues: UPF0179 protein AF_2154 (153 aa).

This sequence belongs to the UPF0179 family.

This is UPF0179 protein AF_2154 from Archaeoglobus fulgidus (strain ATCC 49558 / DSM 4304 / JCM 9628 / NBRC 100126 / VC-16).